The chain runs to 668 residues: DNA ligase (668 aa).

NAD(+)-binding positions include 35–39 (DKEYD) and 83–84 (SL). Lysine 125 functions as the N6-AMP-lysine intermediate in the catalytic mechanism. NAD(+)-binding residues include arginine 147, glutamate 181, and lysine 317. Positions 410, 413, 426, and 432 each coordinate Zn(2+). In terms of domain architecture, BRCT spans 591 to 668 (KKDNKFNGKT…TEEEFNEMIN (78 aa)).

The protein belongs to the NAD-dependent DNA ligase family. LigA subfamily. It depends on Mg(2+) as a cofactor. The cofactor is Mn(2+).

The catalysed reaction is NAD(+) + (deoxyribonucleotide)n-3'-hydroxyl + 5'-phospho-(deoxyribonucleotide)m = (deoxyribonucleotide)n+m + AMP + beta-nicotinamide D-nucleotide.. In terms of biological role, DNA ligase that catalyzes the formation of phosphodiester linkages between 5'-phosphoryl and 3'-hydroxyl groups in double-stranded DNA using NAD as a coenzyme and as the energy source for the reaction. It is essential for DNA replication and repair of damaged DNA. This chain is DNA ligase, found in Clostridium tetani (strain Massachusetts / E88).